The sequence spans 554 residues: Valerianol synthase TPS8 (554 aa).

The DDXXD motif signature appears at 288-292 (QHSVG). Asp307, Asp311, Asp452, Ser456, and Glu460 together coordinate Mg(2+).

Belongs to the terpene synthase family. Requires Mg(2+) as cofactor.

The catalysed reaction is (2E,6E)-farnesyl diphosphate + H2O = valerianol + diphosphate. Its pathway is secondary metabolite biosynthesis; terpenoid biosynthesis. Its function is as follows. Terpene synthase that catalyzes the biosynthesis of the terpene valerianol. This Camellia sinensis (Tea plant) protein is Valerianol synthase TPS8.